Here is a 156-residue protein sequence, read N- to C-terminus: Large ribosomal subunit protein uL23 (156 aa).

Residues 1–19 (MAPKAKKEAPAPPKAEAKA) show a composition bias toward basic and acidic residues. Residues 1–67 (MAPKAKKEAP…PKYPRKSAPR (67 aa)) are disordered. Ala2 bears the N,N,N-trimethylalanine mark. Lys14 is covalently cross-linked (Glycyl lysine isopeptide (Lys-Gly) (interchain with G-Cter in SUMO2)). Residues 20-67 (KALKAKKAVLKGVHSHKKKKIRTSPTFRRPKTLRLRRQPKYPRKSAPR) show a composition bias toward basic residues. Positions 32–74 (VHSHKKKKIRTSPTFRRPKTLRLRRQPKYPRKSAPRRNKLDHY) are beta-like import receptor binding (BIB) domain. Residue Arg41 is modified to Citrulline. At Ser43 the chain carries Phosphoserine. Thr45 is subject to Phosphothreonine. Lys70 carries the N6-acetyllysine modification.

The protein belongs to the universal ribosomal protein uL23 family. In terms of assembly, component of the large ribosomal subunit. Interacts with LYAR and GNL2. Interacts with MDM2; this interaction may promote MDM2-mediated p53/TP53 polyubiquitination. Directly interacts (via BIB domain) with IPO5, IPO7, KPNB1 and TNPO1; these interactions are involved in RPL23A nuclear import for the assembly of ribosomal subunits. Interacts with IPO8. In terms of processing, N-terminus is methylated by METTL11A/NTM1. Citrullinated by PADI4.

It is found in the cytoplasm. The protein localises to the nucleus. Functionally, component of the large ribosomal subunit. The ribosome is a large ribonucleoprotein complex responsible for the synthesis of proteins in the cell. Binds a specific region on the 26S rRNA. May promote p53/TP53 degradation possibly through the stimulation of MDM2-mediated TP53 polyubiquitination. The chain is Large ribosomal subunit protein uL23 (RPL23A) from Bos taurus (Bovine).